The primary structure comprises 494 residues: MPAEPIWPFDNSYARLPERFFARVRPTPVAQPGLVRLNEPLAEALGLEVAALRGKAGLAMFAGNRLPEGAEPIALAYAGHQFGQWVPQLGDGRAVLLGEVVDRDGRRRDIQLKGSGITPFSRGGDGRAPIGPVVREYLASEAMHALGIPTTRSLAAVTTGEPVLRERVEPGGILTRVAHSHVRVGTFEYFHWREDVDALRTLADYVIARHYPELADDARPHLALLKAVIDRTAELVAHWISVGFIHGVMNTDNTSLVGETLDYGPFGFLDAYHPRTCYSAIDIENRYAFDQQPRIAHWNLTRLAETLLPLLHEDEDEAVARAGEALNGFLPRFEACHHARLRAKLGLAESRRGDIDLAHELLDLMARQQADFTQVFRALSDERMDDPDEGPARRCFARPEALDGWRARWIQRLRQEGRPEPARQAAMRAVNPKFILRNHLAQWAVDAATERGDFGPMDRLLQVLTRPYDPQPEAEALAAPPRPEQQVYQTFCGT.

Residues Gly-90, Gly-92, Arg-93, Lys-113, Asp-125, Gly-126, Arg-176, and Arg-183 each coordinate ATP. Asp-252 (proton acceptor) is an active-site residue. Residues Asn-253 and Asp-262 each coordinate Mg(2+). Asp-262 provides a ligand contact to ATP.

It belongs to the SELO family. Mg(2+) serves as cofactor. The cofactor is Mn(2+).

It carries out the reaction L-seryl-[protein] + ATP = 3-O-(5'-adenylyl)-L-seryl-[protein] + diphosphate. The catalysed reaction is L-threonyl-[protein] + ATP = 3-O-(5'-adenylyl)-L-threonyl-[protein] + diphosphate. The enzyme catalyses L-tyrosyl-[protein] + ATP = O-(5'-adenylyl)-L-tyrosyl-[protein] + diphosphate. It catalyses the reaction L-histidyl-[protein] + UTP = N(tele)-(5'-uridylyl)-L-histidyl-[protein] + diphosphate. It carries out the reaction L-seryl-[protein] + UTP = O-(5'-uridylyl)-L-seryl-[protein] + diphosphate. The catalysed reaction is L-tyrosyl-[protein] + UTP = O-(5'-uridylyl)-L-tyrosyl-[protein] + diphosphate. In terms of biological role, nucleotidyltransferase involved in the post-translational modification of proteins. It can catalyze the addition of adenosine monophosphate (AMP) or uridine monophosphate (UMP) to a protein, resulting in modifications known as AMPylation and UMPylation. The polypeptide is Protein nucleotidyltransferase YdiU (Alkalilimnicola ehrlichii (strain ATCC BAA-1101 / DSM 17681 / MLHE-1)).